The chain runs to 369 residues: Flagellar P-ring protein (369 aa).

Positions 1–22 are cleaved as a signal peptide; that stretch reads MFNVRQLIATTLLLSCAFAAQA.

The protein belongs to the FlgI family. As to quaternary structure, the basal body constitutes a major portion of the flagellar organelle and consists of four rings (L,P,S, and M) mounted on a central rod.

It is found in the periplasm. It localises to the bacterial flagellum basal body. In terms of biological role, assembles around the rod to form the L-ring and probably protects the motor/basal body from shearing forces during rotation. In Pseudomonas putida (strain ATCC 47054 / DSM 6125 / CFBP 8728 / NCIMB 11950 / KT2440), this protein is Flagellar P-ring protein.